The sequence spans 669 residues: Methionine--tRNA ligase (669 aa).

The 'HIGH' region motif lies at 14–24 (YYPSGKLHIGN). Residue His-161 coordinates Zn(2+). Positions 309 to 313 (KMSKS) match the 'KMSKS' region motif. Residue Lys-312 coordinates ATP. In terms of domain architecture, tRNA-binding spans 566-669 (DFDKVELKVA…KEMPNGAGIA (104 aa)).

It belongs to the class-I aminoacyl-tRNA synthetase family. MetG type 2B subfamily. Homodimer.

It localises to the cytoplasm. It catalyses the reaction tRNA(Met) + L-methionine + ATP = L-methionyl-tRNA(Met) + AMP + diphosphate. Its function is as follows. Is required not only for elongation of protein synthesis but also for the initiation of all mRNA translation through initiator tRNA(fMet) aminoacylation. This is Methionine--tRNA ligase from Enterococcus faecalis (strain ATCC 700802 / V583).